Consider the following 537-residue polypeptide: ATP synthase subunit alpha (537 aa).

Position 171 to 178 (171 to 178) interacts with ATP; the sequence is GDRQTGKT.

This sequence belongs to the ATPase alpha/beta chains family. In terms of assembly, F-type ATPases have 2 components, CF(1) - the catalytic core - and CF(0) - the membrane proton channel. CF(1) has five subunits: alpha(3), beta(3), gamma(1), delta(1), epsilon(1). CF(0) has four main subunits: a, b, b' and c.

It localises to the cell inner membrane. It carries out the reaction ATP + H2O + 4 H(+)(in) = ADP + phosphate + 5 H(+)(out). In terms of biological role, produces ATP from ADP in the presence of a proton gradient across the membrane. The alpha chain is a regulatory subunit. This Chloroherpeton thalassium (strain ATCC 35110 / GB-78) protein is ATP synthase subunit alpha.